We begin with the raw amino-acid sequence, 54 residues long: Large ribosomal subunit protein bL33 (54 aa).

This sequence belongs to the bacterial ribosomal protein bL33 family.

This chain is Large ribosomal subunit protein bL33, found in Chloroflexus aggregans (strain MD-66 / DSM 9485).